Consider the following 335-residue polypeptide: Aspartate--ammonia ligase (335 aa).

The protein belongs to the class-II aminoacyl-tRNA synthetase family. AsnA subfamily.

It is found in the cytoplasm. The enzyme catalyses L-aspartate + NH4(+) + ATP = L-asparagine + AMP + diphosphate + H(+). Its pathway is amino-acid biosynthesis; L-asparagine biosynthesis; L-asparagine from L-aspartate (ammonia route): step 1/1. The protein is Aspartate--ammonia ligase of Levilactobacillus brevis (strain ATCC 367 / BCRC 12310 / CIP 105137 / JCM 1170 / LMG 11437 / NCIMB 947 / NCTC 947) (Lactobacillus brevis).